Here is a 455-residue protein sequence, read N- to C-terminus: Argininosuccinate lyase (455 aa).

It belongs to the lyase 1 family. Argininosuccinate lyase subfamily.

The protein localises to the cytoplasm. It catalyses the reaction 2-(N(omega)-L-arginino)succinate = fumarate + L-arginine. It participates in amino-acid biosynthesis; L-arginine biosynthesis; L-arginine from L-ornithine and carbamoyl phosphate: step 3/3. This chain is Argininosuccinate lyase, found in Shewanella halifaxensis (strain HAW-EB4).